The chain runs to 371 residues: Maltose/maltodextrin import ATP-binding protein MalK (371 aa).

An ABC transporter domain is found at 4–234; the sequence is VQLQNVTKAW…PADRFVAGFI (231 aa). 36–43 serves as a coordination point for ATP; it reads GPSGCGKS.

Belongs to the ABC transporter superfamily. Maltooligosaccharide importer (TC 3.A.1.1.1) family. In terms of assembly, the complex is composed of two ATP-binding proteins (MalK), two transmembrane proteins (MalG and MalK) and a solute-binding protein (MalE).

It localises to the cell inner membrane. The enzyme catalyses D-maltose(out) + ATP + H2O = D-maltose(in) + ADP + phosphate + H(+). Functionally, part of the ABC transporter complex MalEFGK involved in maltose/maltodextrin import. Responsible for energy coupling to the transport system. The chain is Maltose/maltodextrin import ATP-binding protein MalK from Escherichia coli O6:K15:H31 (strain 536 / UPEC).